Consider the following 976-residue polypeptide: Vacuolar membrane protease (976 aa).

Residues 1–15 (MKLKSVFRSVLKYRK) lie on the Cytoplasmic side of the membrane. The chain crosses the membrane as a helical span at residues 16–36 (TNLSLLLLITYSIITLLYIFD). Over 37 to 359 (HERYKLNLPK…KFFVISAKTL (323 aa)) the chain is Vacuolar. N-linked (GlcNAc...) asparagine glycosylation is found at Asn96 and Asn121. His156 and Asp168 together coordinate Zn(2+). A glycan (N-linked (GlcNAc...) asparagine) is linked at Asn189. Glu200 (proton acceptor) is an active-site residue. Glu201 serves as a coordination point for Zn(2+). 2 N-linked (GlcNAc...) asparagine glycosylation sites follow: Asn212 and Asn217. Glu226 and His300 together coordinate Zn(2+). Residues 360 to 380 (FYWNCIFLLVSPVVAIGLYLI) traverse the membrane as a helical segment. Over 381–392 (SRDRMTWKSHSW) the chain is Cytoplasmic. A helical membrane pass occupies residues 393 to 412 (LSWTRFPLSLAAGIIVQKLF). The Vacuolar portion of the chain corresponds to 413–428 (SNDIIRSNPLTFSRNY). Residues 429-449 (FWPISAFFTQVIFTSYVLINC) traverse the membrane as a helical segment. At 450 to 461 (SNFFFPCADMKS) the chain is on the cytoplasmic side. Residues 462–482 (LSIIELFIILWTILLFTSKLL) traverse the membrane as a helical segment. Over 483–496 (YSSDYRYTGLYPLS) the chain is Vacuolar. Residues 497–517 (IFFLLSTIAAILRLLALALGM) traverse the membrane as a helical segment. Topologically, residues 518 to 627 (RTRKRLGREC…NSLKLEYTDY (110 aa)) are cytoplasmic. Residues 528–610 (RDHHSNYSSH…PLLKGSNSME (83 aa)) form a disordered region. Polar residues predominate over residues 549 to 558 (NLEQPQDQFT). Residues 559 to 570 (SSQDDQASIQDD) are compositionally biased toward low complexity. Residues 582–601 (NVDEDHGMDSSSQQHDERVP) show a composition bias toward basic and acidic residues. The chain crosses the membrane as a helical span at residues 628 to 648 (AWIIQFLLIVPIPSFILFNSV). Topologically, residues 649–668 (DVIMDALNHTVQEGSKATFD) are vacuolar. A glycan (N-linked (GlcNAc...) asparagine) is linked at Asn656. A helical membrane pass occupies residues 669–689 (VLRFGMVGSILIALPILPFFY). Topologically, residues 690–692 (KVN) are cytoplasmic. A helical transmembrane segment spans residues 693–713 (YITISLTALLFLISASKTLLV). Residues 714 to 976 (HPFTNSNPLK…LVIVKDAIIL (263 aa)) lie on the Vacuolar side of the membrane. Asn768, Asn796, Asn811, Asn866, and Asn937 each carry an N-linked (GlcNAc...) asparagine glycan.

This sequence belongs to the peptidase M28 family. Requires Zn(2+) as cofactor.

Its subcellular location is the vacuole membrane. Its function is as follows. May be involved in vacuolar sorting and osmoregulation. The polypeptide is Vacuolar membrane protease (Saccharomyces cerevisiae (strain JAY291) (Baker's yeast)).